Reading from the N-terminus, the 92-residue chain is MSRSVKKGPFIAKSLFKNVNEMNRSGKKKPIKTYSRCSTIIPEMVGNTISVHNGKTWIPVYITENLVGHKLGEFAPTRTFRKHANSDKKVGK.

It belongs to the universal ribosomal protein uS19 family.

Functionally, protein S19 forms a complex with S13 that binds strongly to the 16S ribosomal RNA. This chain is Small ribosomal subunit protein uS19, found in Treponema denticola (strain ATCC 35405 / DSM 14222 / CIP 103919 / JCM 8153 / KCTC 15104).